Reading from the N-terminus, the 54-residue chain is Large ribosomal subunit protein bL33A (54 aa).

This sequence belongs to the bacterial ribosomal protein bL33 family.

This is Large ribosomal subunit protein bL33A from Mycolicibacterium gilvum (strain PYR-GCK) (Mycobacterium gilvum (strain PYR-GCK)).